Reading from the N-terminus, the 372-residue chain is tRNA pseudouridine synthase D (372 aa).

The active-site Nucleophile is D85. A TRUD domain is found at 160-330 (GFTNYFGYQR…MQGSRRFMWG (171 aa)).

It belongs to the pseudouridine synthase TruD family.

The enzyme catalyses uridine(13) in tRNA = pseudouridine(13) in tRNA. Functionally, responsible for synthesis of pseudouridine from uracil-13 in transfer RNAs. In Campylobacter jejuni (strain RM1221), this protein is tRNA pseudouridine synthase D.